Here is a 359-residue protein sequence, read N- to C-terminus: MRELPEFPWDVLLPYKKRAAAHPDGLVNLALGEPVDATPDVLRDALAAATDAPGYPPTEGTPALREAAAAWLRRRLGVTVDPSAVLPAVGTKELIAWLPAMLGTGPGDTVAFPRLAFPTFDVSARLAGARGRPVDSPLELGSEPVKVVWLNSPSNPEGRVLSVPELREIVAWARDRGAVLVNDECYIEYGWDRRPVSLLDSAVCGGSHDGLLAVHSLSKRSNLAGYRAGVCSGDPALIGRLLQVRKHAGHAVPAPVQAAMVAALEDDAHVERQRDRYAYRRRVLRTALEGAGFRVEHSEGGLFLWATRGEPCWPAVQKLADLGILVAPGAFYGEAGEQYVRIAFTATDERIAAAAARLT.

Substrate contacts are provided by Gly-32, Lys-92, and Asn-155. Residues 91 to 92, Asn-155, Tyr-186, and 216 to 218 each bind pyridoxal 5'-phosphate; these read TK and SLS. At Lys-219 the chain carries N6-(pyridoxal phosphate)lysine. Position 227 (Arg-227) interacts with pyridoxal 5'-phosphate. Arg-341 contributes to the substrate binding site.

It belongs to the class-I pyridoxal-phosphate-dependent aminotransferase family. It depends on pyridoxal 5'-phosphate as a cofactor.

It functions in the pathway antibiotic biosynthesis; oxytetracycline biosynthesis. Involved in the biosynthesis of the tetracycline antibiotic, oxytetracycline. Catalyzes the conversion of 4-dedimethylamino-4-oxoanhydrotetracycline to yield 4-amino-4-de(dimethylamino)anhydrotetracycline (4-amino-ATC). In Streptomyces rimosus, this protein is 4-dedimethylamino-4-oxo-anhydrotetracycline transaminase OxyQ.